The sequence spans 174 residues: Ribosome maturation factor RimM (174 aa).

The region spanning Ser-97–Leu-171 is the PRC barrel domain.

It belongs to the RimM family. In terms of assembly, binds ribosomal protein uS19.

It is found in the cytoplasm. Functionally, an accessory protein needed during the final step in the assembly of 30S ribosomal subunit, possibly for assembly of the head region. Essential for efficient processing of 16S rRNA. May be needed both before and after RbfA during the maturation of 16S rRNA. It has affinity for free ribosomal 30S subunits but not for 70S ribosomes. This Geotalea daltonii (strain DSM 22248 / JCM 15807 / FRC-32) (Geobacter daltonii) protein is Ribosome maturation factor RimM.